Consider the following 324-residue polypeptide: Anthranilate phosphoribosyltransferase (324 aa).

Residues glycine 72, 75 to 76, threonine 80, 82 to 85, 99 to 107, and serine 111 contribute to the 5-phospho-alpha-D-ribose 1-diphosphate site; these read GD, NVST, and KHGNVSVTS. Glycine 72 contributes to the anthranilate binding site. Mg(2+) is bound at residue serine 84. Asparagine 102 serves as a coordination point for anthranilate. Anthranilate is bound at residue arginine 157. Residues aspartate 215 and glutamate 216 each contribute to the Mg(2+) site.

This sequence belongs to the anthranilate phosphoribosyltransferase family. In terms of assembly, homodimer. The cofactor is Mg(2+).

It catalyses the reaction N-(5-phospho-beta-D-ribosyl)anthranilate + diphosphate = 5-phospho-alpha-D-ribose 1-diphosphate + anthranilate. It participates in amino-acid biosynthesis; L-tryptophan biosynthesis; L-tryptophan from chorismate: step 2/5. Functionally, catalyzes the transfer of the phosphoribosyl group of 5-phosphorylribose-1-pyrophosphate (PRPP) to anthranilate to yield N-(5'-phosphoribosyl)-anthranilate (PRA). The polypeptide is Anthranilate phosphoribosyltransferase (Pyrococcus furiosus (strain ATCC 43587 / DSM 3638 / JCM 8422 / Vc1)).